Reading from the N-terminus, the 475-residue chain is UDP-N-acetylmuramate--L-alanine ligase (475 aa).

125–131 (GTHGKTT) serves as a coordination point for ATP.

It belongs to the MurCDEF family.

Its subcellular location is the cytoplasm. It catalyses the reaction UDP-N-acetyl-alpha-D-muramate + L-alanine + ATP = UDP-N-acetyl-alpha-D-muramoyl-L-alanine + ADP + phosphate + H(+). The protein operates within cell wall biogenesis; peptidoglycan biosynthesis. Cell wall formation. The polypeptide is UDP-N-acetylmuramate--L-alanine ligase (Haemophilus influenzae (strain 86-028NP)).